Reading from the N-terminus, the 154-residue chain is Ribosome maturation factor RimP (154 aa).

The protein belongs to the RimP family.

The protein localises to the cytoplasm. Its function is as follows. Required for maturation of 30S ribosomal subunits. The sequence is that of Ribosome maturation factor RimP from Yersinia pseudotuberculosis serotype O:1b (strain IP 31758).